Here is a 1380-residue protein sequence, read N- to C-terminus: DNA-directed RNA polymerase subunit beta (1380 aa).

This sequence belongs to the RNA polymerase beta chain family. As to quaternary structure, the RNAP catalytic core consists of 2 alpha, 1 beta, 1 beta' and 1 omega subunit. When a sigma factor is associated with the core the holoenzyme is formed, which can initiate transcription.

The enzyme catalyses RNA(n) + a ribonucleoside 5'-triphosphate = RNA(n+1) + diphosphate. DNA-dependent RNA polymerase catalyzes the transcription of DNA into RNA using the four ribonucleoside triphosphates as substrates. The protein is DNA-directed RNA polymerase subunit beta of Sinorhizobium medicae (strain WSM419) (Ensifer medicae).